Reading from the N-terminus, the 262-residue chain is Ribose-5-phosphate isomerase A (262 aa).

Substrate is bound by residues 33–36 (TGST), 89–92 (DGAD), and 102–105 (KGGG). Catalysis depends on E111, which acts as the Proton acceptor. Residue K129 participates in substrate binding.

It belongs to the ribose 5-phosphate isomerase family. Homodimer.

The enzyme catalyses aldehydo-D-ribose 5-phosphate = D-ribulose 5-phosphate. It functions in the pathway carbohydrate degradation; pentose phosphate pathway; D-ribose 5-phosphate from D-ribulose 5-phosphate (non-oxidative stage): step 1/1. Catalyzes the reversible conversion of ribose-5-phosphate to ribulose 5-phosphate. The chain is Ribose-5-phosphate isomerase A from Ruegeria pomeroyi (strain ATCC 700808 / DSM 15171 / DSS-3) (Silicibacter pomeroyi).